The chain runs to 740 residues: ABC transporter G family member 1 (740 aa).

One can recognise an ABC transporter domain in the interval 82–334 (LDFRNLFPRR…FTEFGSPIPE (253 aa)). Residue 127–134 (GASGSGKS) coordinates ATP. The ABC transmembrane type-2 domain maps to 434 to 644 (IEIKTLSKRS…PYEAVLQNEF (211 aa)). The next 6 membrane-spanning stretches (helical) occupy residues 453–473 (LFGI…TVFW), 488–508 (FFAF…PVFL), 529–549 (VLSH…AFAA), 563–585 (GLLF…VTFL), 594–614 (LGYT…GFFI), and 713–733 (LFIT…TLLL).

Belongs to the ABC transporter superfamily. ABCG family. Eye pigment precursor importer (TC 3.A.1.204) subfamily.

The protein localises to the membrane. This Arabidopsis thaliana (Mouse-ear cress) protein is ABC transporter G family member 1 (ABCG1).